Reading from the N-terminus, the 154-residue chain is D-aminoacyl-tRNA deacylase (154 aa).

Residues 142–143 (GP) carry the Gly-cisPro motif, important for rejection of L-amino acids motif.

It belongs to the DTD family. Homodimer.

Its subcellular location is the cytoplasm. It catalyses the reaction glycyl-tRNA(Ala) + H2O = tRNA(Ala) + glycine + H(+). It carries out the reaction a D-aminoacyl-tRNA + H2O = a tRNA + a D-alpha-amino acid + H(+). Its function is as follows. An aminoacyl-tRNA editing enzyme that deacylates mischarged D-aminoacyl-tRNAs. Also deacylates mischarged glycyl-tRNA(Ala), protecting cells against glycine mischarging by AlaRS. Acts via tRNA-based rather than protein-based catalysis; rejects L-amino acids rather than detecting D-amino acids in the active site. By recycling D-aminoacyl-tRNA to D-amino acids and free tRNA molecules, this enzyme counteracts the toxicity associated with the formation of D-aminoacyl-tRNA entities in vivo and helps enforce protein L-homochirality. The protein is D-aminoacyl-tRNA deacylase of Polaromonas sp. (strain JS666 / ATCC BAA-500).